The chain runs to 206 residues: Protein-methionine-sulfoxide reductase heme-binding subunit MsrQ (206 aa).

6 consecutive transmembrane segments (helical) span residues 7-27, 43-63, 77-97, 112-132, 142-162, and 172-192; these read IIIHVCCLGPVAWLAWVLLSG, FLGFSALTILLIMFILGKVFY, LGLWAWFYVVLHVYAYLALEL, GYLIIGAIAFLILTLMALSSW, WWFYLHQLGYYALLLGAIHYV, and SMLYLILSIMILCDALYGLFI.

Belongs to the MsrQ family. As to quaternary structure, heterodimer of a catalytic subunit (MsrP) and a heme-binding subunit (MsrQ). The cofactor is FMN. Heme b serves as cofactor.

It is found in the cell inner membrane. Part of the MsrPQ system that repairs oxidized periplasmic proteins containing methionine sulfoxide residues (Met-O), using respiratory chain electrons. Thus protects these proteins from oxidative-stress damage caused by reactive species of oxygen and chlorine generated by the host defense mechanisms. MsrPQ is essential for the maintenance of envelope integrity under bleach stress, rescuing a wide series of structurally unrelated periplasmic proteins from methionine oxidation. MsrQ provides electrons for reduction to the reductase catalytic subunit MsrP, using the quinone pool of the respiratory chain. This chain is Protein-methionine-sulfoxide reductase heme-binding subunit MsrQ, found in Pasteurella multocida (strain Pm70).